The sequence spans 321 residues: Glucokinase (321 aa).

Position 8–13 (8–13 (ADIGGT)) interacts with ATP.

Belongs to the bacterial glucokinase family.

The protein localises to the cytoplasm. It catalyses the reaction D-glucose + ATP = D-glucose 6-phosphate + ADP + H(+). The sequence is that of Glucokinase from Paramagnetospirillum magneticum (strain ATCC 700264 / AMB-1) (Magnetospirillum magneticum).